A 571-amino-acid chain; its full sequence is Medium/long-chain-fatty-acid--CoA ligase FadD8 (571 aa).

A disordered region spans residues 1 to 22 (MSTAGDDAVGVPPACGGRSDAV).

It belongs to the ATP-dependent AMP-binding enzyme family.

It catalyses the reaction a medium-chain fatty acid + ATP + CoA = a medium-chain fatty acyl-CoA + AMP + diphosphate. The catalysed reaction is a long-chain fatty acid + ATP + CoA = a long-chain fatty acyl-CoA + AMP + diphosphate. The enzyme catalyses hexanoate + ATP + CoA = hexanoyl-CoA + AMP + diphosphate. It carries out the reaction dodecanoate + ATP + CoA = dodecanoyl-CoA + AMP + diphosphate. It catalyses the reaction hexadecanoate + ATP + CoA = hexadecanoyl-CoA + AMP + diphosphate. It functions in the pathway lipid metabolism; fatty acid metabolism. Functionally, catalyzes the activation of medium/long-chain fatty acids as acyl-coenzyme A (acyl-CoA). The chain is Medium/long-chain-fatty-acid--CoA ligase FadD8 from Mycobacterium tuberculosis (strain ATCC 25618 / H37Rv).